Reading from the N-terminus, the 197-residue chain is Holliday junction branch migration complex subunit RuvA (197 aa).

Residues 1-63 form a domain I region; sequence MFDYIKGQLT…EDAHLLFGFH (63 aa). The tract at residues 64-142 is domain II; it reads TENEKDVFLK…TIPEGGQAQQ (79 aa). The interval 142–146 is flexible linker; that stretch reads QMPKA. Residues 147-197 form a domain III region; sequence KGNQQLDEAIEALLALGYKATELKKIRAFFEGTDDTAEQYIKSALKMLMKG.

This sequence belongs to the RuvA family. In terms of assembly, homotetramer. Forms an RuvA(8)-RuvB(12)-Holliday junction (HJ) complex. HJ DNA is sandwiched between 2 RuvA tetramers; dsDNA enters through RuvA and exits via RuvB. An RuvB hexamer assembles on each DNA strand where it exits the tetramer. Each RuvB hexamer is contacted by two RuvA subunits (via domain III) on 2 adjacent RuvB subunits; this complex drives branch migration. In the full resolvosome a probable DNA-RuvA(4)-RuvB(12)-RuvC(2) complex forms which resolves the HJ.

The protein resides in the cytoplasm. In terms of biological role, the RuvA-RuvB-RuvC complex processes Holliday junction (HJ) DNA during genetic recombination and DNA repair, while the RuvA-RuvB complex plays an important role in the rescue of blocked DNA replication forks via replication fork reversal (RFR). RuvA specifically binds to HJ cruciform DNA, conferring on it an open structure. The RuvB hexamer acts as an ATP-dependent pump, pulling dsDNA into and through the RuvAB complex. HJ branch migration allows RuvC to scan DNA until it finds its consensus sequence, where it cleaves and resolves the cruciform DNA. In Streptococcus uberis (strain ATCC BAA-854 / 0140J), this protein is Holliday junction branch migration complex subunit RuvA.